Consider the following 395-residue polypeptide: Protein phosphatase methylesterase 1 (395 aa).

Residues Ser194, Asp222, and His348 contribute to the active site.

It belongs to the AB hydrolase superfamily.

The catalysed reaction is [phosphatase 2A protein]-C-terminal L-leucine methyl ester + H2O = [phosphatase 2A protein]-C-terminal L-leucine + methanol + H(+). In terms of biological role, demethylates proteins that have been reversibly carboxymethylated. Demethylates the phosphatase PP2A catalytic subunit. This is Protein phosphatase methylesterase 1 (PPE1) from Kluyveromyces lactis (strain ATCC 8585 / CBS 2359 / DSM 70799 / NBRC 1267 / NRRL Y-1140 / WM37) (Yeast).